We begin with the raw amino-acid sequence, 109 residues long: U4-lycotoxin-Ls1c (109 aa).

The first 22 residues, 1–22 (MKVLVLFSVLFLTLFSYSSTEA), serve as a signal peptide directing secretion. A propeptide spanning residues 23–44 (IDEFDSDAEDDMLSLMANEQVR) is cleaved from the precursor. The segment at 45 to 88 (AKACTPRLHDCSHDRHSCCRGELFKDVCYCFYPEGEDITEVCSC) is knottin domain. Cystine bridges form between C48–C63, C55–C72, C62–C88, and C74–C86. Positions 89 to 108 (QQPKSHKYIEKVVDKAKTVV) are linear cationic cytotoxin domain.

Belongs to the neurotoxin 19 (CSTX) family. 05 (U4-Lctx) subfamily. In terms of tissue distribution, expressed by the venom gland.

The protein localises to the secreted. Enhances the high-affinity desensitization of human P2RX3 purinoceptors. The chain is U4-lycotoxin-Ls1c from Lycosa singoriensis (Wolf spider).